Reading from the N-terminus, the 231-residue chain is Transcriptional regulator NRG1 (231 aa).

A Phosphoserine modification is found at serine 163. 2 C2H2-type zinc fingers span residues 174–196 (YICK…NRIH) and 202–226 (HCCP…YRTH).

The protein resides in the nucleus. In terms of biological role, transcriptional repressor involved in regulation of glucose repression. Binds to UAS-1 in the STA1 promoter. The sequence is that of Transcriptional regulator NRG1 (NRG1) from Saccharomyces cerevisiae (strain ATCC 204508 / S288c) (Baker's yeast).